Here is a 38-residue protein sequence, read N- to C-terminus: Phospholipase A2 2 (38 aa).

Ca(2+) is bound by residues Tyr-28, Gly-30, and Gly-32.

The protein belongs to the phospholipase A2 family. Group I subfamily. It depends on Ca(2+) as a cofactor. In terms of tissue distribution, expressed by the venom gland.

It localises to the secreted. The catalysed reaction is a 1,2-diacyl-sn-glycero-3-phosphocholine + H2O = a 1-acyl-sn-glycero-3-phosphocholine + a fatty acid + H(+). Snake venom phospholipase A2 (PLA2) that inhibits neuromuscular transmission by blocking acetylcholine release from the nerve termini. PLA2 catalyzes the calcium-dependent hydrolysis of the 2-acyl groups in 3-sn-phosphoglycerides. This chain is Phospholipase A2 2, found in Calliophis bivirgatus (Blue Malaysian coral snake).